The following is a 443-amino-acid chain: Methyl-coenzyme M reductase II subunit beta (443 aa).

Tyrosine 367 provides a ligand contact to coenzyme M. Glycine 369 contacts coenzyme B.

It belongs to the methyl-coenzyme M reductase beta subunit family. MCR is a hexamer of two alpha, two beta, and two gamma chains, forming a dimer of heterotrimers. Requires coenzyme F430 as cofactor.

The catalysed reaction is coenzyme B + methyl-coenzyme M = methane + coenzyme M-coenzyme B heterodisulfide. The protein operates within one-carbon metabolism; methyl-coenzyme M reduction; methane from methyl-coenzyme M: step 1/1. Functionally, component of the methyl-coenzyme M reductase (MCR) I that catalyzes the reductive cleavage of methyl-coenzyme M (CoM-S-CH3 or 2-(methylthio)ethanesulfonate) using coenzyme B (CoB or 7-mercaptoheptanoylthreonine phosphate) as reductant which results in the production of methane and the mixed heterodisulfide of CoB and CoM (CoM-S-S-CoB). This is the final step in methanogenesis. The polypeptide is Methyl-coenzyme M reductase II subunit beta (mrtB) (Methanothermus fervidus (strain ATCC 43054 / DSM 2088 / JCM 10308 / V24 S)).